A 185-amino-acid polypeptide reads, in one-letter code: Ribosome-recycling factor (185 aa).

This sequence belongs to the RRF family.

It localises to the cytoplasm. Responsible for the release of ribosomes from messenger RNA at the termination of protein biosynthesis. May increase the efficiency of translation by recycling ribosomes from one round of translation to another. The sequence is that of Ribosome-recycling factor from Thermobifida fusca (strain YX).